Consider the following 227-residue polypeptide: Probable septum site-determining protein MinC (227 aa).

It belongs to the MinC family. As to quaternary structure, interacts with MinD and FtsZ.

Functionally, cell division inhibitor that blocks the formation of polar Z ring septums. Rapidly oscillates between the poles of the cell to destabilize FtsZ filaments that have formed before they mature into polar Z rings. Prevents FtsZ polymerization. This chain is Probable septum site-determining protein MinC, found in Geobacillus kaustophilus (strain HTA426).